Reading from the N-terminus, the 110-residue chain is Large ribosomal subunit protein uL22 (110 aa).

This sequence belongs to the universal ribosomal protein uL22 family. As to quaternary structure, part of the 50S ribosomal subunit.

Its function is as follows. This protein binds specifically to 23S rRNA; its binding is stimulated by other ribosomal proteins, e.g. L4, L17, and L20. It is important during the early stages of 50S assembly. It makes multiple contacts with different domains of the 23S rRNA in the assembled 50S subunit and ribosome. In terms of biological role, the globular domain of the protein is located near the polypeptide exit tunnel on the outside of the subunit, while an extended beta-hairpin is found that lines the wall of the exit tunnel in the center of the 70S ribosome. The polypeptide is Large ribosomal subunit protein uL22 (Aliarcobacter butzleri (strain RM4018) (Arcobacter butzleri)).